The chain runs to 331 residues: Bifunctional nuclease 1 (331 aa).

Positions 126-261 (CVQNNPRVLR…RIAYNNGLKV (136 aa)) constitute a BFN domain. In terms of domain architecture, UVR spans 291–326 (EAQEFDLVRNMLVAAVEERYKDAAQYRDQLFMFRAK).

Belongs to the bifunctional nuclease family.

Its subcellular location is the nucleus. Functionally, bifunctional nuclease with both RNase and DNase activities. Involved in basal defense response. Participates in abscisic acid-derived callose deposition following infection by a necrotrophic pathogen. The sequence is that of Bifunctional nuclease 1 (BBD1) from Oryza sativa subsp. indica (Rice).